A 555-amino-acid polypeptide reads, in one-letter code: La-related protein 7 (555 aa).

The HTH La-type RNA-binding domain occupies arginine 36–proline 127. In terms of domain architecture, RRM spans arginine 133–threonine 211. Residues proline 218–leucine 327 are disordered. Polar residues-rich tracts occupy residues lysine 238–aspartate 251, serine 258–serine 274, and serine 284–glutamate 293. A coiled-coil region spans residues glutamine 295 to isoleucine 356. Positions arginine 303–leucine 327 are enriched in basic and acidic residues. A xRRM domain is found at glutamate 425–lysine 538.

Belongs to the LARP7 family. As to quaternary structure, core component of the 7SK RNP complex. Associates with box C/D small nucleolar ribonucleoprotein (snoRNP) complexes.

Its subcellular location is the nucleus. The protein resides in the nucleoplasm. Functionally, RNA-binding protein that specifically binds distinct small nuclear RNA (snRNAs) and regulates their processing and function. Specifically binds the 7SK snRNA (7SK RNA) and acts as a core component of the 7SK ribonucleoprotein (RNP) complex, thereby acting as a negative regulator of transcription elongation by RNA polymerase II. The 7SK RNP complex sequesters the positive transcription elongation factor b (P-TEFb) in a large inactive 7SK RNP complex preventing RNA polymerase II phosphorylation and subsequent transcriptional elongation. The 7SK RNP complex also promotes snRNA gene transcription by RNA polymerase II via interaction with the little elongation complex (LEC). LARP7 specifically binds to the highly conserved 3'-terminal U-rich stretch of 7SK RNA; on stimulation, remains associated with 7SK RNA, whereas P-TEFb is released from the complex. LARP7 also acts as a regulator of mRNA splicing fidelity by promoting U6 snRNA processing. Specifically binds U6 snRNAs and associates with a subset of box C/D RNP complexes: promotes U6 snRNA 2'-O-methylation by facilitating U6 snRNA loading into box C/D RNP complexes. U6 snRNA 2'-O-methylation is required for mRNA splicing fidelity. This is La-related protein 7 from Danio rerio (Zebrafish).